Consider the following 2648-residue polypeptide: E3 ubiquitin-protein ligase hecd-1 (2648 aa).

2 ANK repeats span residues V374–K403 and H405–L434. Over residues D433–N455 the composition is skewed to basic and acidic residues. Disordered regions lie at residues D433–N494, P645–A714, and D1376–P1400. Composition is skewed to polar residues over residues A478 to K489, N652 to P661, and T670 to T688. Composition is skewed to low complexity over residues S696 to A714 and P1383 to P1400. Positions R1438–T1510 constitute an MIB/HERC2 domain. 4 disordered regions span residues Y1538–R1562, K1575–H1629, N1652–G1796, and E1811–P1836. 2 stretches are compositionally biased toward low complexity: residues T1543–R1562 and K1575–G1586. Positions T1610–H1629 are enriched in polar residues. Over residues Q1653 to D1666 the composition is skewed to acidic residues. The span at S1667–D1696 shows a compositional bias: low complexity. 2 stretches are compositionally biased toward acidic residues: residues T1736–N1746 and D1756–S1783. A compositionally biased stretch (low complexity) spans S1812–A1823. The region spanning F2240 to N2648 is the HECT domain. C2617 serves as the catalytic Glycyl thioester intermediate.

This sequence belongs to the UPL family. K-HECT subfamily. Expressed in most tissues, including hypodermis, muscle, intestine, vulva, and neurons.

It carries out the reaction S-ubiquitinyl-[E2 ubiquitin-conjugating enzyme]-L-cysteine + [acceptor protein]-L-lysine = [E2 ubiquitin-conjugating enzyme]-L-cysteine + N(6)-ubiquitinyl-[acceptor protein]-L-lysine.. It functions in the pathway protein modification; protein ubiquitination. E3 ubiquitin-protein ligase which accepts ubiquitin from an E2 ubiquitin-conjugating enzyme in the form of a thioester and then directly transfers the ubiquitin to targeted substrates. Involved in the ubiquitination and proteasomal-mediated degradation of cytoplasmic and mitochondrial proteins. Positively regulates lin-12 activity in the anchor cell (AC)/vulval precursor (VU) cell fate decision. Negatively regulates glp-1 activity in germline proliferation. May play a role in the formation of fibrous organelles, a hemidesmosome-like structure attaching muscles to the epidermis. Regulates germline DNA double-strand-break repair and apoptosis in response to DNA damage by recruiting E4 ubiquitin-protein ligase ufd-2 to DNA repair foci. The protein is E3 ubiquitin-protein ligase hecd-1 of Caenorhabditis elegans.